A 315-amino-acid chain; its full sequence is Cytochrome f (315 aa).

The N-terminal stretch at 1–30 (MRTFLKFSTLVSKGVLVLVCSFFLTASSNA) is a signal peptide. Positions 31, 51, 54, and 55 each coordinate heme. A helical membrane pass occupies residues 281-300 (IQGLLVFFLFVLLAQVFLVL).

It belongs to the cytochrome f family. The 4 large subunits of the cytochrome b6-f complex are cytochrome b6, subunit IV (17 kDa polypeptide, petD), cytochrome f and the Rieske protein, while the 4 small subunits are PetG, PetL, PetM and PetN. The complex functions as a dimer. Heme serves as cofactor.

It is found in the plastid. The protein resides in the chloroplast thylakoid membrane. Its function is as follows. Component of the cytochrome b6-f complex, which mediates electron transfer between photosystem II (PSII) and photosystem I (PSI), cyclic electron flow around PSI, and state transitions. This chain is Cytochrome f (petA), found in Chlorella vulgaris (Green alga).